A 245-amino-acid polypeptide reads, in one-letter code: Aliphatic sulfonates import ATP-binding protein SsuB (245 aa).

In terms of domain architecture, ABC transporter spans 6 to 225 (VTVRGLRRAF…SRGDEGFDDL (220 aa)). Residue 38–45 (GLSGSGKS) coordinates ATP.

It belongs to the ABC transporter superfamily. Aliphatic sulfonates importer (TC 3.A.1.17.2) family. As to quaternary structure, the complex is composed of two ATP-binding proteins (SsuB), two transmembrane proteins (SsuC) and a solute-binding protein (SsuA).

It localises to the cell membrane. It carries out the reaction ATP + H2O + aliphatic sulfonate-[sulfonate-binding protein]Side 1 = ADP + phosphate + aliphatic sulfonateSide 2 + [sulfonate-binding protein]Side 1.. Part of the ABC transporter complex SsuABC involved in aliphatic sulfonates import. Responsible for energy coupling to the transport system. The polypeptide is Aliphatic sulfonates import ATP-binding protein SsuB (Mycobacterium sp. (strain MCS)).